Consider the following 360-residue polypeptide: Homeobox protein ceh-60 (360 aa).

Residues 1-82 are PBC-A; it reads MDNLIKQLQM…ENPTFPLEEV (82 aa). The PBC domain occupies 1-179; it reads MDNLIKQLQM…ILVLRREIEQ (179 aa). Positions 85–179 are PBC-B; sequence EKDEEWQPLE…ILVLRREIEQ (95 aa). A DNA-binding region (homeobox) is located at residues 180-242; sequence QGRKRRNFDK…NQRIRTKQQA (63 aa).

It belongs to the TALE/PBX homeobox family. As to quaternary structure, forms a heterodimer with homeobox unc-62. Interacts with pqm-1.

It is found in the nucleus. In terms of biological role, probable transcription regulator which binds to DNA, repressing genes involved in longevity and stress, while activating genes involved in reproduction, such as the vitellogenins. Associates with homeobox unc-62 to regulate gene expression, including repression of genes involved in innate immunity. Required for intestinal expression of vitellogenin genes. Negatively modulates longevity, probably independently of effects on vitellogenesis. Involved in lipid homeostasis, contributing to the reallocation of intestinal lipids to the germline and to the formation of the cuticle. Associates with transcriptional regulator pqm-1 at the daf-16 associated element within the promoters of stress-responsive genes to regulate expression. The sequence is that of Homeobox protein ceh-60 from Caenorhabditis elegans.